Consider the following 540-residue polypeptide: Probable ATP-dependent RNA helicase DDX28 (540 aa).

Residues 3–18 (LTRPVRLFSLVTRLLL) carry the Mitochondrial targeting signal motif. The Q motif motif lies at 126-156 (GSFADLGLEPRVLHALQEAAPEVVQPTTVQS). In terms of domain architecture, Helicase ATP-binding spans 159 to 351 (IPSLLRGRHV…NKVASPDAVT (193 aa)). 172-179 (AETGSGKT) is a binding site for ATP. The Nuclear export signal signature appears at 180 to 191 (LSYLLPLLQRLL). A DEAD motif is present at residues 286–289 (DEAD). A Helicase C-terminal domain is found at 377–536 (KVAELVHILK…GLASSVKEPL (160 aa)). The short motif at 520–523 (RRRR) is the Nuclear localization signal element.

It belongs to the DEAD box helicase family. In terms of assembly, monomer. Found in a complex with GRSF1, DHX30, FASTKD2 and FASTKD5. Associates with the 16S mitochondrial rRNA (16S mt-rRNA) and with the mitochondrial ribosome large subunit (39S). As to expression, expressed in all tissues tested, including brain, placenta, lung, liver, skeletal muscle, kidney, pancreas, leukocytes, colon, small intestine, ovary and prostate.

The protein resides in the nucleus. It is found in the mitochondrion. It localises to the mitochondrion matrix. The protein localises to the mitochondrion nucleoid. The enzyme catalyses ATP + H2O = ADP + phosphate + H(+). Plays an essential role in facilitating the proper assembly of the mitochondrial large ribosomal subunit and its helicase activity is essential for this function. May be involved in RNA processing or transport. Has RNA and Mg(2+)-dependent ATPase activity. In Homo sapiens (Human), this protein is Probable ATP-dependent RNA helicase DDX28 (DDX28).